Here is a 451-residue protein sequence, read N- to C-terminus: Phosphoglucosamine mutase (451 aa).

Ser102 acts as the Phosphoserine intermediate in catalysis. Ser102, Asp242, Asp244, and Asp246 together coordinate Mg(2+). Ser102 is subject to Phosphoserine.

The protein belongs to the phosphohexose mutase family. Mg(2+) serves as cofactor. Activated by phosphorylation.

It catalyses the reaction alpha-D-glucosamine 1-phosphate = D-glucosamine 6-phosphate. Its function is as follows. Catalyzes the conversion of glucosamine-6-phosphate to glucosamine-1-phosphate. The protein is Phosphoglucosamine mutase of Staphylococcus saprophyticus subsp. saprophyticus (strain ATCC 15305 / DSM 20229 / NCIMB 8711 / NCTC 7292 / S-41).